Here is a 412-residue protein sequence, read N- to C-terminus: MAKQTLGSLLSSGFDLAGKRVLVRADFNVPLDAQGNITDDTRIRAALPTVQALTQAGAKVILTSHLGRPVKKDKETGAVKVAREGNSLAPVATRLSQLLGQPVAFAPDCIGPEAEAVVNRLENGQVALLENVRFYPEEEDNDPEFARKLASLADLFVNDAFGSAHRAHASTAGVTAYLQPAVAGYLVERELQFLSGAIEDPRRPLAAIIGGSKVSTKIGVIERLLEKVDKLLLGGGMIFTFYQAQGIQTGKSLVETDKLDLARSLMEKAKERGVELLLPVDVVVADRFDKDAQAQTVSIHAIPEDWMGLDIGPESVKAFQSALQGCQTVVWNGPMGVFEFDRFALGTEAIARTLADLTQAGATTIIGGGDSVAAVEKVGLADKMTHISTGGGASLELLEGKVLPGIAALTEA.

Substrate contacts are provided by residues 26–28 (DFN), arginine 42, 65–68 (HLGR), arginine 133, and arginine 166. Residues lysine 217, glycine 308, glutamate 339, and 368–371 (GGDS) each bind ATP.

The protein belongs to the phosphoglycerate kinase family. Monomer.

Its subcellular location is the cytoplasm. It carries out the reaction (2R)-3-phosphoglycerate + ATP = (2R)-3-phospho-glyceroyl phosphate + ADP. The protein operates within carbohydrate degradation; glycolysis; pyruvate from D-glyceraldehyde 3-phosphate: step 2/5. The chain is Phosphoglycerate kinase from Synechococcus sp. (strain JA-2-3B'a(2-13)) (Cyanobacteria bacterium Yellowstone B-Prime).